The following is a 491-amino-acid chain: Ketol-acid reductoisomerase (NADP(+)) (491 aa).

The region spanning A15–S208 is the KARI N-terminal Rossmann domain. NADP(+) contacts are provided by residues C45–Q48, R68, R76, S78, and D108–Q110. Residue H132 is part of the active site. G158 lines the NADP(+) pocket. KARI C-terminal knotted domains are found at residues S209–Q344 and Y345–M484. Mg(2+) contacts are provided by D217, E221, E389, and E393. Substrate is bound at residue S414.

The protein belongs to the ketol-acid reductoisomerase family. The cofactor is Mg(2+).

It carries out the reaction (2R)-2,3-dihydroxy-3-methylbutanoate + NADP(+) = (2S)-2-acetolactate + NADPH + H(+). The enzyme catalyses (2R,3R)-2,3-dihydroxy-3-methylpentanoate + NADP(+) = (S)-2-ethyl-2-hydroxy-3-oxobutanoate + NADPH + H(+). Its pathway is amino-acid biosynthesis; L-isoleucine biosynthesis; L-isoleucine from 2-oxobutanoate: step 2/4. It participates in amino-acid biosynthesis; L-valine biosynthesis; L-valine from pyruvate: step 2/4. In terms of biological role, involved in the biosynthesis of branched-chain amino acids (BCAA). Catalyzes an alkyl-migration followed by a ketol-acid reduction of (S)-2-acetolactate (S2AL) to yield (R)-2,3-dihydroxy-isovalerate. In the isomerase reaction, S2AL is rearranged via a Mg-dependent methyl migration to produce 3-hydroxy-3-methyl-2-ketobutyrate (HMKB). In the reductase reaction, this 2-ketoacid undergoes a metal-dependent reduction by NADPH to yield (R)-2,3-dihydroxy-isovalerate. In Escherichia coli O6:K15:H31 (strain 536 / UPEC), this protein is Ketol-acid reductoisomerase (NADP(+)).